A 142-amino-acid polypeptide reads, in one-letter code: ATP synthase epsilon chain (142 aa).

Belongs to the ATPase epsilon chain family. In terms of assembly, F-type ATPases have 2 components, CF(1) - the catalytic core - and CF(0) - the membrane proton channel. CF(1) has five subunits: alpha(3), beta(3), gamma(1), delta(1), epsilon(1). CF(0) has three main subunits: a, b and c.

It is found in the cell inner membrane. Its function is as follows. Produces ATP from ADP in the presence of a proton gradient across the membrane. The sequence is that of ATP synthase epsilon chain from Shewanella piezotolerans (strain WP3 / JCM 13877).